Reading from the N-terminus, the 522-residue chain is Glutamate--cysteine ligase (522 aa).

The protein belongs to the glutamate--cysteine ligase type 1 family. Type 1 subfamily.

The catalysed reaction is L-cysteine + L-glutamate + ATP = gamma-L-glutamyl-L-cysteine + ADP + phosphate + H(+). It participates in sulfur metabolism; glutathione biosynthesis; glutathione from L-cysteine and L-glutamate: step 1/2. The protein is Glutamate--cysteine ligase of Vibrio campbellii (strain ATCC BAA-1116).